A 558-amino-acid polypeptide reads, in one-letter code: Atlastin-1 (558 aa).

The tract at residues 1 to 28 (MAKSRRDRNSWGGFSEKSSDWSSEEEEP) is disordered. The segment at 1 to 34 (MAKSRRDRNSWGGFSEKSSDWSSEEEEPVRKAGP) is N-terminal hypervariable region (HVR). At 1–449 (MAKSRRDRNS…NIFHAARTPA (449 aa)) the chain is on the cytoplasmic side. Residues serine 10, serine 22, and serine 23 each carry the phosphoserine modification. The region spanning 64–309 (DKEVVAVSVA…LIPWLLSPER (246 aa)) is the GB1/RHD3-type G domain. 11 residues coordinate GDP: arginine 77, lysine 78, glycine 79, lysine 80, serine 81, phenylalanine 82, glutamine 148, arginine 217, aspartate 218, valine 276, and asparagine 279. GTP-binding residues include arginine 77, lysine 78, glycine 79, lysine 80, serine 81, and phenylalanine 82. Residue serine 81 participates in Mg(2+) binding. GTP-binding residues include arginine 217, aspartate 218, and valine 276. Positions 347–438 (MLQATAEANN…YIQYIKHNDS (92 aa)) are 3HB (three-helix bundle) domain. An N6-acetyllysine modification is found at lysine 395. Residues 412-439 (EFSRRYLQQLESEIDELYIQYIKHNDSK) adopt a coiled-coil conformation. A linker region spans residues 439–447 (KNIFHAART). The helical transmembrane segment at 450-470 (TLFVVIFITYVIAGVTGFIGL) threads the bilayer. Residue aspartate 471 is a topological domain, lumenal. The helical transmembrane segment at 472–492 (IIASLCNMIMGLTLITLCTWA) threads the bilayer. Over 493 to 558 (YIRYSGEYRE…PTQQPEKKKI (66 aa)) the chain is Cytoplasmic. The interval 521-558 (NEALYKLYSAAATHRHLCHQAFPAPKSEPTQQPEKKKI) is autoinhibitory domain.

It belongs to the TRAFAC class dynamin-like GTPase superfamily. GB1/RHD3 GTPase family. GB1 subfamily. Monomeric and homodimeric. The homodimer, transiently formed by two molecules on opposing membranes, is the active form mediating ER membrane fusion. Interacts with REEP1, REEP5, RTN3 and RTN4 (via the transmembrane region); these proteins are involved in endoplasmic reticulum tubular network organization. Interacts with ZFYVE27; both proteins are involved in endoplasmic reticulum tubular network organization. Interacts with ARL6IP1; both proteins are involved in endoplasmic reticulum tubular network organization. Interacts with SPAST; the interaction is direct, could recruit SPAST to Golgi membranes. Interacts (via N-terminal region) with MAP4K4 (via CNH regulatory domain). May interact with TMED2. Interacts with CPT1C. In terms of processing, phosphorylated. Phosphorylation, by different kinases, of the N-terminal hypervariable region (HVR) regulates the ATL1-mediated membrane tethering step.

Its subcellular location is the endoplasmic reticulum membrane. The protein resides in the golgi apparatus membrane. The protein localises to the cell projection. It is found in the axon. It catalyses the reaction GTP + H2O = GDP + phosphate + H(+). Functionally, atlastin-1 (ATL1) is a membrane-anchored GTPase that mediates the GTP-dependent fusion of endoplasmic reticulum (ER) membranes, maintaining the continuous ER network. It facilitates the formation of three-way junctions where ER tubules intersect. Two atlastin-1 on neighboring ER tubules bind GTP and form loose homodimers through the GB1/RHD3-type G domains and 3HB regions. Upon GTP hydrolysis, the 3HB regions tighten, pulling the membranes together to drive their fusion. After fusion, the homodimer disassembles upon release of inorganic phosphate (Pi). Subsequently, GDP dissociates, resetting the monomers to a conformation ready for a new fusion cycle. May also regulate more or less directly Golgi biogenesis. Indirectly regulates axonal development. This chain is Atlastin-1, found in Mus musculus (Mouse).